A 506-amino-acid chain; its full sequence is Adenylosuccinate synthetase (506 aa).

Residues 35-41 (GDEGKGK) and 63-65 (GHT) contribute to the GTP site. The active-site Proton acceptor is Asp36. Mg(2+)-binding residues include Asp36 and Gly63. Residues 36 to 39 (DEGK), 61 to 64 (NAGH), Thr212, Arg226, Asn304, Thr319, and Arg383 contribute to the IMP site. The active-site Proton donor is the His64. 379–385 (VTTKRKR) serves as a coordination point for substrate. GTP-binding positions include Arg385, 411 to 413 (KLD), and 494 to 496 (GVG).

Belongs to the adenylosuccinate synthetase family. Homodimer. Requires Mg(2+) as cofactor.

The protein resides in the cytoplasm. The catalysed reaction is IMP + L-aspartate + GTP = N(6)-(1,2-dicarboxyethyl)-AMP + GDP + phosphate + 2 H(+). It functions in the pathway purine metabolism; AMP biosynthesis via de novo pathway; AMP from IMP: step 1/2. In terms of biological role, plays an important role in the de novo pathway and in the salvage pathway of purine nucleotide biosynthesis. Catalyzes the first committed step in the biosynthesis of AMP from IMP. In Drosophila yakuba (Fruit fly), this protein is Adenylosuccinate synthetase.